The primary structure comprises 201 residues: Small ribosomal subunit protein uS4 (201 aa).

The interval 19 to 41 (LVGGSSAYEKRPYPPGQHGRARI) is disordered. Residues 91–157 (SRLDNVVYRA…LPFEVARETA (67 aa)) form the S4 RNA-binding domain.

It belongs to the universal ribosomal protein uS4 family. In terms of assembly, part of the 30S ribosomal subunit. Contacts protein S5. The interaction surface between S4 and S5 is involved in control of translational fidelity.

Functionally, one of the primary rRNA binding proteins, it binds directly to 16S rRNA where it nucleates assembly of the body of the 30S subunit. Its function is as follows. With S5 and S12 plays an important role in translational accuracy. This chain is Small ribosomal subunit protein uS4, found in Mycobacteroides abscessus (strain ATCC 19977 / DSM 44196 / CCUG 20993 / CIP 104536 / JCM 13569 / NCTC 13031 / TMC 1543 / L948) (Mycobacterium abscessus).